Reading from the N-terminus, the 77-residue chain is MIYKVFYQETKERSPRRETTRALYLDIDASSELEGRIAARQLVEENRPEYNIEYIELLSDKLLDYEKETGAFKITEF.

It belongs to the RNA polymerase subunit epsilon family. RNAP is composed of a core of 2 alpha, a beta and a beta' subunit. The core is associated with a delta subunit, and at least one of epsilon or omega. When a sigma factor is associated with the core the holoenzyme is formed, which can initiate transcription.

The catalysed reaction is RNA(n) + a ribonucleoside 5'-triphosphate = RNA(n+1) + diphosphate. A non-essential component of RNA polymerase (RNAP). The polypeptide is DNA-directed RNA polymerase subunit epsilon (Streptococcus pneumoniae (strain P1031)).